Consider the following 768-residue polypeptide: 5-methyltetrahydropteroyltriglutamate--homocysteine methyltransferase (768 aa).

Residues 17–20 (RELK) and lysine 117 contribute to the 5-methyltetrahydropteroyltri-L-glutamate site. Residues 442 to 444 (IGS) and glutamate 495 contribute to the L-homocysteine site. L-methionine contacts are provided by residues 442-444 (IGS) and glutamate 495. Residues 526-527 (RC) and tryptophan 572 each bind 5-methyltetrahydropteroyltri-L-glutamate. Aspartate 610 lines the L-homocysteine pocket. Aspartate 610 lines the L-methionine pocket. Glutamate 616 serves as a coordination point for 5-methyltetrahydropteroyltri-L-glutamate. Histidine 653, cysteine 655, and glutamate 677 together coordinate Zn(2+). The active-site Proton donor is the histidine 706. Cysteine 738 contributes to the Zn(2+) binding site.

The protein belongs to the vitamin-B12 independent methionine synthase family. Requires Zn(2+) as cofactor.

It carries out the reaction 5-methyltetrahydropteroyltri-L-glutamate + L-homocysteine = tetrahydropteroyltri-L-glutamate + L-methionine. Its pathway is amino-acid biosynthesis; L-methionine biosynthesis via de novo pathway; L-methionine from L-homocysteine (MetE route): step 1/1. Its function is as follows. Catalyzes the transfer of a methyl group from 5-methyltetrahydrofolate to homocysteine resulting in methionine formation. This chain is 5-methyltetrahydropteroyltriglutamate--homocysteine methyltransferase, found in Bifidobacterium adolescentis (strain ATCC 15703 / DSM 20083 / NCTC 11814 / E194a).